We begin with the raw amino-acid sequence, 98 residues long: Aspartyl/glutamyl-tRNA(Asn/Gln) amidotransferase subunit C (98 aa).

The protein belongs to the GatC family. Heterotrimer of A, B and C subunits.

The enzyme catalyses L-glutamyl-tRNA(Gln) + L-glutamine + ATP + H2O = L-glutaminyl-tRNA(Gln) + L-glutamate + ADP + phosphate + H(+). It carries out the reaction L-aspartyl-tRNA(Asn) + L-glutamine + ATP + H2O = L-asparaginyl-tRNA(Asn) + L-glutamate + ADP + phosphate + 2 H(+). Allows the formation of correctly charged Asn-tRNA(Asn) or Gln-tRNA(Gln) through the transamidation of misacylated Asp-tRNA(Asn) or Glu-tRNA(Gln) in organisms which lack either or both of asparaginyl-tRNA or glutaminyl-tRNA synthetases. The reaction takes place in the presence of glutamine and ATP through an activated phospho-Asp-tRNA(Asn) or phospho-Glu-tRNA(Gln). The protein is Aspartyl/glutamyl-tRNA(Asn/Gln) amidotransferase subunit C of Arthrobacter sp. (strain FB24).